A 196-amino-acid chain; its full sequence is RNA pyrophosphohydrolase (196 aa).

In terms of domain architecture, Nudix hydrolase spans 6-149 (GYRPNVGIVI…KRDVYRKVMK (144 aa)). The Nudix box signature appears at 38 to 59 (GGINDNESAEQAMYRELHEEVG).

The protein belongs to the Nudix hydrolase family. RppH subfamily. The cofactor is a divalent metal cation.

In terms of biological role, accelerates the degradation of transcripts by removing pyrophosphate from the 5'-end of triphosphorylated RNA, leading to a more labile monophosphorylated state that can stimulate subsequent ribonuclease cleavage. This Haemophilus influenzae (strain PittEE) protein is RNA pyrophosphohydrolase.